The following is a 749-amino-acid chain: Subtilisin-like protease SBT4.14 (749 aa).

The N-terminal stretch at 1-28 (MIRSKCSCHHHLLVLVMVVLWISPRYAS) is a signal peptide. The propeptide at 29 to 115 (AEDEHAKDFY…VSRNQYRKLH (87 aa)) is activation peptide. Positions 38-115 (YIIYLGDRPD…VSRNQYRKLH (78 aa)) constitute an Inhibitor I9 domain. The region spanning 119 to 595 (SWDFVGLPLT…GGQINPRRAA (477 aa)) is the Peptidase S8 domain. Aspartate 145 functions as the Charge relay system in the catalytic mechanism. Asparagine 176 carries N-linked (GlcNAc...) asparagine glycosylation. Histidine 210 acts as the Charge relay system in catalysis. Asparagine 225, asparagine 233, asparagine 446, and asparagine 458 each carry an N-linked (GlcNAc...) asparagine glycan. The active-site Charge relay system is the serine 536. A glycan (N-linked (GlcNAc...) asparagine) is linked at asparagine 618.

Belongs to the peptidase S8 family. In terms of processing, the C-terminal propeptide is autocleaved. Expressed only in roots, particularly in xylem.

In Arabidopsis thaliana (Mouse-ear cress), this protein is Subtilisin-like protease SBT4.14.